We begin with the raw amino-acid sequence, 732 residues long: Coagulation factor XIII A chain (732 aa).

Positions Met-1 to Asp-26 are disordered. The residue at position 2 (Ser-2) is an N-acetylserine. Residues Ser-2 to Arg-38 constitute a propeptide, activation peptide. Active-site residues include Cys-315, His-374, and Asp-397. Positions 437, 439, 486, and 491 each coordinate Ca(2+). Residue Asn-614 is glycosylated (N-linked (GlcNAc...) asparagine).

The protein belongs to the transglutaminase superfamily. Transglutaminase family. In terms of assembly, tetramer of two A chains (F13A1) and two B (F13B) chains. The cofactor is Ca(2+). In terms of processing, the activation peptide is released by thrombin.

It localises to the cytoplasm. The protein resides in the secreted. The enzyme catalyses L-glutaminyl-[protein] + L-lysyl-[protein] = [protein]-L-lysyl-N(6)-5-L-glutamyl-[protein] + NH4(+). Factor XIII is activated by thrombin and calcium ion to a transglutaminase that catalyzes the formation of gamma-glutamyl-epsilon-lysine cross-links between fibrin chains, thus stabilizing the fibrin clot. Also cross-link alpha-2-plasmin inhibitor, or fibronectin, to the alpha chains of fibrin. This Mus musculus (Mouse) protein is Coagulation factor XIII A chain (F13a1).